Reading from the N-terminus, the 926-residue chain is Ubiquitin carboxyl-terminal hydrolase 4 (926 aa).

The region spanning 205–328 (SQMEILLIDI…WLKSNYGRQV (124 aa)) is the Rhodanese domain. Ser443 bears the Phosphoserine mark. A USP domain is found at 562-923 (VGLENLGNSC…NAYVLFYHRV (362 aa)). Cys571 acts as the Nucleophile in catalysis. His880 (proton acceptor) is an active-site residue.

It belongs to the peptidase C19 family. In terms of assembly, interacts with BRO1, RFU1 and VPS32. Associates with the 26S proteasome.

The protein localises to the cytoplasm. Its subcellular location is the late endosome membrane. The catalysed reaction is Thiol-dependent hydrolysis of ester, thioester, amide, peptide and isopeptide bonds formed by the C-terminal Gly of ubiquitin (a 76-residue protein attached to proteins as an intracellular targeting signal).. RFU1 is an inhibitor of deubiquitination activity. Ubiquitin thioesterase that acts at the late endosome/prevacuolar compartment to recover ubiquitin from ubiquitinated membrane proteins en route to the vacuole. Also removes ubiquitin from soluble proteins targeted to proteasomes. Is essential to maintain a normal level of free ubiquitin. Involved in the ammonium-induced down-regulation of the GAP1 permease and the UME3 destruction in response to oxidative stress. Has a role in the RAD9 checkpoint response to TOP1 poisons. Required for promoting coordination of DNA replication and avoids DNA overreplication. This is Ubiquitin carboxyl-terminal hydrolase 4 (DOA4) from Saccharomyces cerevisiae (strain ATCC 204508 / S288c) (Baker's yeast).